The chain runs to 426 residues: Glutamyl-tRNA reductase (426 aa).

Substrate is bound by residues Thr-49–Arg-52, Ser-109, Glu-114–Gln-116, and Gln-120. Cys-50 acts as the Nucleophile in catalysis. Position 189–194 (Gly-189–Gly-194) interacts with NADP(+).

Belongs to the glutamyl-tRNA reductase family. As to quaternary structure, homodimer.

The enzyme catalyses (S)-4-amino-5-oxopentanoate + tRNA(Glu) + NADP(+) = L-glutamyl-tRNA(Glu) + NADPH + H(+). It functions in the pathway porphyrin-containing compound metabolism; protoporphyrin-IX biosynthesis; 5-aminolevulinate from L-glutamyl-tRNA(Glu): step 1/2. It participates in porphyrin-containing compound metabolism; chlorophyll biosynthesis. Catalyzes the NADPH-dependent reduction of glutamyl-tRNA(Glu) to glutamate 1-semialdehyde (GSA). This is Glutamyl-tRNA reductase from Prosthecochloris aestuarii (strain DSM 271 / SK 413).